The primary structure comprises 346 residues: Phosphoribosylformylglycinamidine cyclo-ligase (346 aa).

The protein belongs to the AIR synthase family.

The protein localises to the cytoplasm. The enzyme catalyses 2-formamido-N(1)-(5-O-phospho-beta-D-ribosyl)acetamidine + ATP = 5-amino-1-(5-phospho-beta-D-ribosyl)imidazole + ADP + phosphate + H(+). The protein operates within purine metabolism; IMP biosynthesis via de novo pathway; 5-amino-1-(5-phospho-D-ribosyl)imidazole from N(2)-formyl-N(1)-(5-phospho-D-ribosyl)glycinamide: step 2/2. This Alteromonas mediterranea (strain DSM 17117 / CIP 110805 / LMG 28347 / Deep ecotype) protein is Phosphoribosylformylglycinamidine cyclo-ligase.